The following is a 2498-amino-acid chain: Nuclear receptor corepressor 1 (2498 aa).

Disordered regions lie at residues 1–38 (MSSS…QQEY), 54–84 (IQQQ…SGYD), 134–169 (SEVK…SKLS), and 198–223 (QQQL…VEQK). 3 stretches are compositionally biased toward basic and acidic residues: residues 71-82 (PVSDRPQDRRSG), 134-148 (SEVK…KHES), and 204-213 (EAAKPPEPEK). The segment at 154 to 304 (SGQPGDDQDA…REQNICQRYD (151 aa)) is interaction with tbl1xr1-A. The stretch at 168 to 208 (LSKEELIQSMDRVDREIAKVEQQILKLKKKQQQLEEEAAKP) forms a coiled coil. In terms of domain architecture, SANT 1 spans 427-478 (QFMNVWTDHEKEIFKEKFVRHPKNFGLIASYLERKNVSDCVLYYYLTKKNEN). Over residues 483–493 (VRRNYPKRRGR) the composition is skewed to basic residues. Disordered stretches follow at residues 483 to 649 (VRRN…GSKS), 668 to 912 (NLLQ…FGSR), 1075 to 1122 (SLSD…GTPG), 1417 to 1436 (DLVS…IMEG), 1470 to 1583 (SWGV…QRES), 1737 to 1851 (PGTQ…AQES), and 1916 to 1990 (PQME…TAHT). Basic and acidic residues-rich tracts occupy residues 502–525 (SQEE…KEDE) and 535–548 (KEEL…KIDA). Residues 502 to 552 (SQEEKEIEKVEEEKADRNDKKEDERREEEEKEEKEELREGAKDKIDAVAED) are a coiled coil. Residues 582–611 (ASEAAAANAVTTATTAPVTTTSTATTVAPV) show a composition bias toward low complexity. Residues 612-627 (PVAPPPEEPTPPPPPQ) show a composition bias toward pro residues. The region spanning 628 to 665 (EQSLVDHGRNWGAIAKMVGSKSESQCKNFYFNYKRRHN) is the SANT 2 domain. The segment covering 689–699 (QCDSIASTVSA) has biased composition (polar residues). Over residues 700 to 719 (QEDDENEASNEEENPEDSEG) the composition is skewed to acidic residues. 2 stretches are compositionally biased toward low complexity: residues 727–738 (ESAPSPSPAEAA) and 761–774 (DAAS…SPSP). Residues 854-863 (MERLMDRAEA) are compositionally biased toward basic and acidic residues. Polar residues-rich tracts occupy residues 872–891 (QNIS…SATC) and 1102–1122 (ATSS…GTPG). The segment covering 1484–1501 (KMGERSKHEDTKSSDAIR) has biased composition (basic and acidic residues). Residues 1505–1516 (TSVVSSGPSVLR) show a composition bias toward polar residues. Residues 1545 to 1558 (PSPMSRSSPMARSA) show a composition bias toward low complexity. Residues 1765–1804 (VSAERERERERERERDREREKEQRERESDRERERDRLAHA) are a coiled coil. The segment covering 1767-1802 (AERERERERERERDREREKEQRERESDRERERDRLA) has biased composition (basic and acidic residues). Low complexity-rich tracts occupy residues 1803–1813 (HAAAAAAAASA) and 1820–1835 (RPVS…RPSS). The segment covering 1842–1851 (PSPSVRAQES) has biased composition (polar residues). Positions 1921–1942 (AKPKESKNDSARSEENLSRRNA) are enriched in basic and acidic residues. The segment covering 1958–1980 (SPYTSSSFSSSKSQSQPSSAVYS) has biased composition (low complexity). The CORNR box 1 motif lies at 2012-2016 (IDVII). The tract at residues 2022 to 2109 (SDKDGRERNS…SPPQQTIPGH (88 aa)) is disordered. Residues 2031 to 2040 (SQSSDASSSH) show a composition bias toward low complexity. Positions 2043 to 2052 (HRYEAPRETI) are enriched in basic and acidic residues. Residues 2093–2106 (RYRQQQESPPQQTI) show a composition bias toward polar residues. The short motif at 2123 to 2127 (ICHII) is the CORNR box 2 element. Over residues 2136-2145 (PVNQPLQQPP) the composition is skewed to low complexity. Residues 2136-2222 (PVNQPLQQPP…PISPPQAPML (87 aa)) are disordered. The segment covering 2146–2175 (ASTFQSTNPTSTAVRTKASSRFSPESQVQP) has biased composition (polar residues). Over residues 2190-2209 (IPDKPRGRPGKSPDRGHISE) the composition is skewed to basic and acidic residues. Positions 2326–2330 (LEDII) match the CORNR box 3 motif. 2 disordered regions span residues 2344–2446 (DHGV…YNPL) and 2464–2498 (TSMT…DSDE). The segment covering 2353–2362 (QGNQSGTPNS) has biased composition (polar residues). Basic residues predominate over residues 2380–2394 (HKQKLISKYGSRKTK). 2 stretches are compositionally biased toward polar residues: residues 2464–2476 (TSMT…QQSR) and 2489–2498 (QYETLSDSDE).

Belongs to the N-CoR nuclear receptor corepressors family. As to quaternary structure, forms a large corepressor complex that contains sin3a/b, histone deacetylases hdac1 and hdac2, rbbp4 and possibly rbbp7. Interacts with the thyroid receptor (TR, composed of rxra and thrb) and the retinoid acid receptor (RAR, composed of rxra and rara) in the absence of ligand. Interacts with tbl1xr1-A and possibly tbl1xr1-B. Interacts with zbtb33/kaiso.

The protein resides in the nucleus. In terms of biological role, mediates transcriptional repression by certain nuclear receptors. Participates in complexes which promote histone deacetylation and the formation of repressive chromatin structures which may impede access by the basal transcription machinery. In association with hdac3, may play a role in the regulation of the circadian clock. The chain is Nuclear receptor corepressor 1 (ncor1) from Xenopus laevis (African clawed frog).